The sequence spans 293 residues: Energy-coupling factor transporter ATP-binding protein EcfA2 (293 aa).

An ABC transporter domain is found at 3–246 (ITFQKVEHRY…ADELEKIGVD (244 aa)). 40-47 (GHTGSGKS) provides a ligand contact to ATP.

It belongs to the ABC transporter superfamily. Energy-coupling factor EcfA family. Forms a stable energy-coupling factor (ECF) transporter complex composed of 2 membrane-embedded substrate-binding proteins (S component), 2 ATP-binding proteins (A component) and 2 transmembrane proteins (T component).

The protein localises to the cell membrane. In terms of biological role, ATP-binding (A) component of a common energy-coupling factor (ECF) ABC-transporter complex. Unlike classic ABC transporters this ECF transporter provides the energy necessary to transport a number of different substrates. The polypeptide is Energy-coupling factor transporter ATP-binding protein EcfA2 (Bacillus cereus (strain ZK / E33L)).